The chain runs to 521 residues: Bifunctional purine biosynthesis protein PurH (521 aa).

The region spanning 1 to 147 is the MGS-like domain; the sequence is MGEITRALIS…KNWEGVTVLV (147 aa).

The protein belongs to the PurH family.

It catalyses the reaction (6R)-10-formyltetrahydrofolate + 5-amino-1-(5-phospho-beta-D-ribosyl)imidazole-4-carboxamide = 5-formamido-1-(5-phospho-D-ribosyl)imidazole-4-carboxamide + (6S)-5,6,7,8-tetrahydrofolate. The enzyme catalyses IMP + H2O = 5-formamido-1-(5-phospho-D-ribosyl)imidazole-4-carboxamide. It participates in purine metabolism; IMP biosynthesis via de novo pathway; 5-formamido-1-(5-phospho-D-ribosyl)imidazole-4-carboxamide from 5-amino-1-(5-phospho-D-ribosyl)imidazole-4-carboxamide (10-formyl THF route): step 1/1. It functions in the pathway purine metabolism; IMP biosynthesis via de novo pathway; IMP from 5-formamido-1-(5-phospho-D-ribosyl)imidazole-4-carboxamide: step 1/1. The sequence is that of Bifunctional purine biosynthesis protein PurH from Acidithiobacillus ferrooxidans (strain ATCC 53993 / BNL-5-31) (Leptospirillum ferrooxidans (ATCC 53993)).